The sequence spans 361 residues: Protein Wnt-2 (361 aa).

Positions 1-27 (MNASVLGLCLSGPLVLLLAWLAPPVTS) are cleaved as a signal peptide. Cystine bridges form between C77–C88, C128–C136, C138–C158, C207–C221, C209–C216, C279–C310, C295–C305, C309–C349, C325–C340, C327–C337, and C332–C333. S213 is lipidated: O-palmitoleoyl serine; by PORCN. N296 is a glycosylation site (N-linked (GlcNAc...) asparagine).

It belongs to the Wnt family. Palmitoleoylation is required for efficient binding to frizzled receptors. Depalmitoleoylation leads to Wnt signaling pathway inhibition.

The protein localises to the secreted. The protein resides in the extracellular space. Its subcellular location is the extracellular matrix. Ligand for members of the frizzled family of seven transmembrane receptors. Probable developmental protein. May be a signaling molecule which affects the development of discrete regions of tissues. Is likely to signal over only few cell diameters. This chain is Protein Wnt-2 (WNT2), found in Ornithorhynchus anatinus (Duckbill platypus).